The chain runs to 420 residues: Putative transporter AmpG 3 (420 aa).

12 helical membrane passes run 6 to 26, 41 to 61, 79 to 99, 104 to 124, 141 to 161, 166 to 186, 230 to 250, 274 to 294, 297 to 317, 324 to 344, 359 to 381, and 386 to 406; these read YLIG…LIFF, IVGS…WSPF, GWAL…LKRS, LCIT…QDIV, IAFT…SVGA, IIFG…VGPI, LLLI…PMAM, LLIM…IGIF, VLIG…LATI, FIIT…IISI, YSIS…GICA, and WPVF…IFYI.

The protein belongs to the major facilitator superfamily.

It localises to the cell inner membrane. In Rickettsia typhi (strain ATCC VR-144 / Wilmington), this protein is Putative transporter AmpG 3 (ampG3).